A 329-amino-acid polypeptide reads, in one-letter code: Eukaryotic translation initiation factor 2 subunit 1 (329 aa).

Residues 24–95 (DDLIMVKVNR…QKGYIDLSKR (72 aa)) form the S1 motif domain. S59 carries the post-translational modification Phosphoserine; by eIK1, eIK2 and PK4. Residues 291–329 (LDKHDGISSDDDDYNTSDEDDENSSEEDENTSEDEEEED) form a disordered region. Over residues 298 to 329 (SSDDDDYNTSDEDDENSSEEDENTSEDEEEED) the composition is skewed to acidic residues.

It belongs to the eIF-2-alpha family. Phosphorylated at Ser-59 by eIK1 in response to amino acid starvation. Phosphorylates at Ser-59 in schizonts and gametocytes but not in rings and young trophozoites. Phosphorylates at Ser-59 by eIK2 in salivary gland sporozoites but not in midgut and hemocoel sporozoites. Dephosphorylated at Ser-59 by UIS2. Phosphorylation of eIF2alpha subunit of the pre-initiation complex eIF2 inhibits recycling of inactive eIF2-GDP to active eIF2-GTP by limiting the activity of the guanine nucleotide exchange factor eIF2B and thus, inhibits protein translation.

The protein localises to the cytoplasm. It is found in the stress granule. In terms of biological role, functions in the early steps of protein synthesis by forming a ternary complex with GTP and initiator tRNA. May regulate protein translation in response to amino acid starvation. May regulate protein at various stages of parasite development. This Plasmodium falciparum (isolate 3D7) protein is Eukaryotic translation initiation factor 2 subunit 1.